The chain runs to 346 residues: GTP 3',8-cyclase (346 aa).

The Radical SAM core domain occupies 10 to 240 (QRSRPLRVLR…VTRIRARWPL (231 aa)). Position 19 (Arg19) interacts with GTP. Positions 26 and 30 each coordinate [4Fe-4S] cluster. S-adenosyl-L-methionine is bound at residue Tyr32. Cys33 contacts [4Fe-4S] cluster. Arg65 is a binding site for GTP. Gly69 contacts S-adenosyl-L-methionine. Residue Thr104 participates in GTP binding. An S-adenosyl-L-methionine-binding site is contributed by Ser129. Lys177 is a GTP binding site. Residue Met211 participates in S-adenosyl-L-methionine binding. Cys274 and Cys277 together coordinate [4Fe-4S] cluster. 279–281 (RLR) contacts GTP. [4Fe-4S] cluster is bound at residue Cys291. The tract at residues 326–346 (SDERQQTTGSMPHAEMAYLGG) is disordered.

The protein belongs to the radical SAM superfamily. MoaA family. In terms of assembly, monomer and homodimer. Requires [4Fe-4S] cluster as cofactor.

The enzyme catalyses GTP + AH2 + S-adenosyl-L-methionine = (8S)-3',8-cyclo-7,8-dihydroguanosine 5'-triphosphate + 5'-deoxyadenosine + L-methionine + A + H(+). The protein operates within cofactor biosynthesis; molybdopterin biosynthesis. In terms of biological role, catalyzes the cyclization of GTP to (8S)-3',8-cyclo-7,8-dihydroguanosine 5'-triphosphate. The chain is GTP 3',8-cyclase from Parasynechococcus marenigrum (strain WH8102).